We begin with the raw amino-acid sequence, 273 residues long: MNDKHLPDASAENPWLPLRQLTPARIALGRTGTSLPTRPQLDFQYAHAQARDAVHLPFDHAAISDGLRQRGRDSLLLHSAAADRHVYLQRPDLGRRLDEASVQRLREHAAGYDGQIDLAIVVADGLSALAVQRHTLPFLERLEEQALAEGWSLSPVVLVEQGRVAVADEIGELLRAKMSVILIGERPGLSSPDSLGLYFTWAPRVGLTDAYRNCISNVRLEGLSYGMAAHRLLYLMREACRRQLSGVNLKDEAEVQALEGEAPRTGNFLLARD.

Residues V164, E185, and C214 each contribute to the adenosylcob(III)alamin site.

This sequence belongs to the EutC family. In terms of assembly, the basic unit is a heterodimer which dimerizes to form tetramers. The heterotetramers trimerize; 6 large subunits form a core ring with 6 small subunits projecting outwards. Adenosylcob(III)alamin serves as cofactor.

Its subcellular location is the bacterial microcompartment. The enzyme catalyses ethanolamine = acetaldehyde + NH4(+). It functions in the pathway amine and polyamine degradation; ethanolamine degradation. Functionally, catalyzes the deamination of various vicinal amino-alcohols to oxo compounds. Allows this organism to utilize ethanolamine as the sole source of nitrogen and carbon in the presence of external vitamin B12. The chain is Ethanolamine ammonia-lyase small subunit from Pseudomonas aeruginosa (strain UCBPP-PA14).